A 115-amino-acid chain; its full sequence is Large ribosomal subunit protein bL20 (115 aa).

This sequence belongs to the bacterial ribosomal protein bL20 family.

Its function is as follows. Binds directly to 23S ribosomal RNA and is necessary for the in vitro assembly process of the 50S ribosomal subunit. It is not involved in the protein synthesizing functions of that subunit. This Chlorobium limicola (strain DSM 245 / NBRC 103803 / 6330) protein is Large ribosomal subunit protein bL20.